Consider the following 314-residue polypeptide: Mevalonate kinase (314 aa).

Residue 103-109 participates in ATP binding; sequence GLGTSAA. Aspartate 150 acts as the Proton acceptor in catalysis.

The protein belongs to the GHMP kinase family. Mevalonate kinase subfamily. Homodimer. Mg(2+) is required as a cofactor.

It localises to the cytoplasm. The catalysed reaction is (R)-mevalonate + ATP = (R)-5-phosphomevalonate + ADP + H(+). Its pathway is isoprenoid biosynthesis; isopentenyl diphosphate biosynthesis via mevalonate pathway; isopentenyl diphosphate from (R)-mevalonate: step 1/3. Functionally, catalyzes the phosphorylation of (R)-mevalonate (MVA) to (R)-mevalonate 5-phosphate (MVAP). Functions in the mevalonate (MVA) pathway leading to isopentenyl diphosphate (IPP), a key precursor for the biosynthesis of isoprenoid compounds such as archaeal membrane lipids. The sequence is that of Mevalonate kinase from Saccharolobus solfataricus (strain ATCC 35092 / DSM 1617 / JCM 11322 / P2) (Sulfolobus solfataricus).